A 190-amino-acid polypeptide reads, in one-letter code: ATP synthase subunit b (190 aa).

The helical transmembrane segment at 4–24 (ILAPVLSLVLIAGVASPALAA) threads the bilayer.

The protein belongs to the ATPase B chain family. In terms of assembly, F-type ATPases have 2 components, F(1) - the catalytic core - and F(0) - the membrane proton channel. F(1) has five subunits: alpha(3), beta(3), gamma(1), delta(1), epsilon(1). F(0) has three main subunits: a(1), b(2) and c(10-14). The alpha and beta chains form an alternating ring which encloses part of the gamma chain. F(1) is attached to F(0) by a central stalk formed by the gamma and epsilon chains, while a peripheral stalk is formed by the delta and b chains.

It is found in the cell inner membrane. F(1)F(0) ATP synthase produces ATP from ADP in the presence of a proton or sodium gradient. F-type ATPases consist of two structural domains, F(1) containing the extramembraneous catalytic core and F(0) containing the membrane proton channel, linked together by a central stalk and a peripheral stalk. During catalysis, ATP synthesis in the catalytic domain of F(1) is coupled via a rotary mechanism of the central stalk subunits to proton translocation. Functionally, component of the F(0) channel, it forms part of the peripheral stalk, linking F(1) to F(0). This chain is ATP synthase subunit b, found in Ruegeria pomeroyi (strain ATCC 700808 / DSM 15171 / DSS-3) (Silicibacter pomeroyi).